Reading from the N-terminus, the 341-residue chain is 2-acylglycerol O-acyltransferase 3 (341 aa).

The next 2 membrane-spanning stretches (helical) occupy residues 29-49 and 50-70; these read YVLTFLFMGPFFSLLVFVLLF and TSLWPFSVFYLVWLYVDWDTP. N-linked (GlcNAc...) asparagine glycosylation is present at Asn126. Residues 137–157 traverse the membrane as a helical segment; it reads LFPGLRPWLAVLAGLFYLPVY.

The protein belongs to the diacylglycerol acyltransferase family. Ubiquitinated. Ubiquitination leads to proteasomal degradation. In terms of tissue distribution, selectively expressed in the digestive system. Highly expressed in the ileum, and at lower level in jejunum, duodenum, colon, cecum and the rectum. Not expressed in the stomach and the esophagus and trachea. Expressed at very low level in liver.

The protein resides in the endoplasmic reticulum membrane. It is found in the cytoplasm. The protein localises to the perinuclear region. It catalyses the reaction a 2-acylglycerol + an acyl-CoA = a 1,2-diacylglycerol + CoA. It carries out the reaction an acyl-CoA + a 1,2-diacyl-sn-glycerol = a triacyl-sn-glycerol + CoA. The enzyme catalyses 2-(9Z-octadecenoyl)-glycerol + (9Z)-octadecenoyl-CoA = 1,2-di-(9Z-octadecenoyl)-sn-glycerol + CoA. The catalysed reaction is 2-(9Z-octadecenoyl)-glycerol + hexadecanoyl-CoA = 1-hexadecanoyl-2-(9Z-octadecenoyl)-sn-glycerol + CoA. It catalyses the reaction 1,2-di-(9Z-octadecenoyl)-sn-glycerol + (9Z)-octadecenoyl-CoA = 1,2,3-tri-(9Z-octadecenoyl)-glycerol + CoA. It carries out the reaction 1-hexadecanoyl-2-(9Z-octadecenoyl)-sn-glycerol + hexadecanoyl-CoA = 1,3-dihexadecanoyl-2-(9Z-octadecenoyl)glycerol + CoA. The enzyme catalyses all-trans-retinol + hexadecanoyl-CoA = all-trans-retinyl hexadecanoate + CoA. The catalysed reaction is 1-O-(9Z-octadecenyl)-glycerol + (9Z)-octadecenoyl-CoA = 1-O-(9Z-octadecyl)-3-(9Z-octadecenoyl)-glycerol + CoA. It catalyses the reaction 1-O-(9Z-octadecyl)-3-(9Z-octadecenoyl)-glycerol + (9Z)-octadecenoyl-CoA = 1-O-(9Z-octadecenyl)-2,3-di-(9Z-octadecenoyl)glycerol + CoA. The protein operates within glycerolipid metabolism; triacylglycerol biosynthesis. In terms of biological role, catalyzes the formation of diacylglycerol from 2-monoacylglycerol and fatty acyl-CoA. Also able to catalyze the terminal step in triacylglycerol synthesis by using diacylglycerol and fatty acyl-CoA as substrates. Has a preference toward palmitoyl-CoA and oleoyl-CoA. May be involved in absorption of dietary fat in the small intestine by catalyzing the resynthesis of triacylglycerol in enterocytes. Also able to use 1-monoalkylglycerol (1-MAkG) as an acyl acceptor for the synthesis of monoalkyl-monoacylglycerol (MAMAG). This Homo sapiens (Human) protein is 2-acylglycerol O-acyltransferase 3.